Reading from the N-terminus, the 356-residue chain is UDP-N-acetylglucosamine--N-acetylmuramyl-(pentapeptide) pyrophosphoryl-undecaprenol N-acetylglucosamine transferase (356 aa).

Residues 15–17 (TGG), N127, R163, S191, I244, 263–268 (ALTVSE), and Q288 each bind UDP-N-acetyl-alpha-D-glucosamine.

Belongs to the glycosyltransferase 28 family. MurG subfamily.

The protein resides in the cell inner membrane. The catalysed reaction is di-trans,octa-cis-undecaprenyl diphospho-N-acetyl-alpha-D-muramoyl-L-alanyl-D-glutamyl-meso-2,6-diaminopimeloyl-D-alanyl-D-alanine + UDP-N-acetyl-alpha-D-glucosamine = di-trans,octa-cis-undecaprenyl diphospho-[N-acetyl-alpha-D-glucosaminyl-(1-&gt;4)]-N-acetyl-alpha-D-muramoyl-L-alanyl-D-glutamyl-meso-2,6-diaminopimeloyl-D-alanyl-D-alanine + UDP + H(+). It participates in cell wall biogenesis; peptidoglycan biosynthesis. Its function is as follows. Cell wall formation. Catalyzes the transfer of a GlcNAc subunit on undecaprenyl-pyrophosphoryl-MurNAc-pentapeptide (lipid intermediate I) to form undecaprenyl-pyrophosphoryl-MurNAc-(pentapeptide)GlcNAc (lipid intermediate II). This Yersinia pseudotuberculosis serotype O:1b (strain IP 31758) protein is UDP-N-acetylglucosamine--N-acetylmuramyl-(pentapeptide) pyrophosphoryl-undecaprenol N-acetylglucosamine transferase.